Here is a 464-residue protein sequence, read N- to C-terminus: A-type ATP synthase subunit B (464 aa).

This sequence belongs to the ATPase alpha/beta chains family. As to quaternary structure, has multiple subunits with at least A(3), B(3), C, D, E, F, H, I and proteolipid K(x).

Its subcellular location is the cell membrane. In terms of biological role, component of the A-type ATP synthase that produces ATP from ADP in the presence of a proton gradient across the membrane. The B chain is a regulatory subunit. The chain is A-type ATP synthase subunit B from Methanococcus aeolicus (strain ATCC BAA-1280 / DSM 17508 / OCM 812 / Nankai-3).